Reading from the N-terminus, the 65-residue chain is Large ribosomal subunit protein bL32 (65 aa).

Belongs to the bacterial ribosomal protein bL32 family.

The polypeptide is Large ribosomal subunit protein bL32 (Metamycoplasma arthritidis (strain 158L3-1) (Mycoplasma arthritidis)).